Consider the following 142-residue polypeptide: MLMPKRVKYRKQQRGRMRGEAKGGTTVDFGEWGLKALAPAWITAQQIEAGRIAIMRVMKRSGKLWIRVFPDKPYTKKPAESRQGKGKGNVEGWVSVVKPGKIIFEIAGVDENTAKEALKYAASKFPIPTKIVSRSNIGGEAV.

Belongs to the universal ribosomal protein uL16 family. Part of the 50S ribosomal subunit.

Functionally, binds 23S rRNA and is also seen to make contacts with the A and possibly P site tRNAs. This chain is Large ribosomal subunit protein uL16, found in Pseudothermotoga lettingae (strain ATCC BAA-301 / DSM 14385 / NBRC 107922 / TMO) (Thermotoga lettingae).